The sequence spans 508 residues: Photosystem II CP47 reaction center protein (508 aa).

6 consecutive transmembrane segments (helical) span residues 21–36, 101–115, 140–156, 203–218, 237–252, and 457–472; these read AVHI…WAGS, IVFS…IWHW, GIHL…FGAF, IAAG…FHLS, VLSS…AFIV, and TFAL…HGAR.

It belongs to the PsbB/PsbC family. PsbB subfamily. As to quaternary structure, PSII is composed of 1 copy each of membrane proteins PsbA, PsbB, PsbC, PsbD, PsbE, PsbF, PsbH, PsbI, PsbJ, PsbK, PsbL, PsbM, PsbT, PsbX, PsbY, PsbZ, Psb30/Ycf12, at least 3 peripheral proteins of the oxygen-evolving complex and a large number of cofactors. It forms dimeric complexes. Binds multiple chlorophylls. PSII binds additional chlorophylls, carotenoids and specific lipids. is required as a cofactor.

Its subcellular location is the plastid. The protein localises to the chloroplast thylakoid membrane. Its function is as follows. One of the components of the core complex of photosystem II (PSII). It binds chlorophyll and helps catalyze the primary light-induced photochemical processes of PSII. PSII is a light-driven water:plastoquinone oxidoreductase, using light energy to abstract electrons from H(2)O, generating O(2) and a proton gradient subsequently used for ATP formation. The polypeptide is Photosystem II CP47 reaction center protein (Cryptomeria japonica (Japanese cedar)).